Consider the following 402-residue polypeptide: S-adenosylmethionine synthase (402 aa).

Residue Gly-137–Asp-142 coordinates ATP.

It belongs to the AdoMet synthase 2 family. Mg(2+) serves as cofactor.

It carries out the reaction L-methionine + ATP + H2O = S-adenosyl-L-methionine + phosphate + diphosphate. The protein operates within amino-acid biosynthesis; S-adenosyl-L-methionine biosynthesis; S-adenosyl-L-methionine from L-methionine: step 1/1. Its function is as follows. Catalyzes the formation of S-adenosylmethionine from methionine and ATP. The chain is S-adenosylmethionine synthase from Pyrobaculum neutrophilum (strain DSM 2338 / JCM 9278 / NBRC 100436 / V24Sta) (Thermoproteus neutrophilus).